Reading from the N-terminus, the 410-residue chain is Polyprenol-phosphate-mannose-dependent alpha-(1-2)-phosphatidylinositol pentamannoside mannosyltransferase (410 aa).

10 helical membrane passes run L31 to P51, F96 to W116, T160 to T180, L188 to L208, A214 to V234, G276 to W296, L306 to H326, W328 to G348, I351 to A371, and L384 to F404.

Belongs to the glycosyltransferase 87 family.

Its subcellular location is the cell membrane. It functions in the pathway phospholipid metabolism; phosphatidylinositol metabolism. Catalyzes the alpha-1,2 addition of a mannose residue from polyprenol-phosphate-mannose (PPM) to a monoacyl phosphatidylinositol tetramannoside (AcPIM4) to generate a monoacyl phosphatidylinositol pentamannoside (AcPIM5). This Mycolicibacterium smegmatis (strain ATCC 700084 / mc(2)155) (Mycobacterium smegmatis) protein is Polyprenol-phosphate-mannose-dependent alpha-(1-2)-phosphatidylinositol pentamannoside mannosyltransferase.